We begin with the raw amino-acid sequence, 870 residues long: Breast cancer anti-estrogen resistance protein 1 (870 aa).

Met-1 carries the post-translational modification N-acetylmethionine. In terms of domain architecture, SH3 spans 3–65 (HLNVLAKALY…PGNRLKILVG (63 aa)). Positions 70–156 (KPAGPGPGPP…TFSKQTPHHP (87 aa)) are disordered. The span at 73–85 (GPGPGPPATPAQP) shows a compositional bias: pro residues. A compositionally biased stretch (polar residues) spans 97–111 (SQYTPMLPNTYQPQP). Residues 115–416 (YLVPTPSKAQ…SGVYAVPPPA (302 aa)) are substrate for kinases. Tyr-128 carries the post-translational modification Phosphotyrosine; by SRC. 2 positions are modified to phosphoserine: Ser-134 and Ser-139. Over residues 135–151 (PQFQSPPAKQTSTFSKQ) the composition is skewed to polar residues. Tyr-234 bears the Phosphotyrosine mark. Tyr-249 is modified (phosphotyrosine; by ABL1). At Thr-269 the chain carries Phosphothreonine. Position 292 is a phosphoserine (Ser-292). Residues Tyr-362, Tyr-372, and Tyr-410 each carry the phosphotyrosine modification. Disordered stretches follow at residues 411–449 (AVPPPAEREAPAEGKRLSASSTGSTRSSQSASSLEVAGP), 609–658 (KATA…NSEG), and 715–734 (IDHDLANWTPAQPLAPGRTG). Residues 416 to 426 (AEREAPAEGKR) show a composition bias toward basic and acidic residues. Over residues 427–444 (LSASSTGSTRSSQSASSL) the composition is skewed to low complexity. A phosphoserine mark is found at Ser-428, Ser-437, and Ser-639. Residues 626–655 (TDKTSSIQSRPLPSPPKFTSQDSPDGQYEN) are compositionally biased toward polar residues. The short motif at 635 to 643 (RPLPSPPKF) is the SH3-binding element. The segment at 746 to 796 (FYLEQCEANLTTLTNAVDAFFTAVATNQPPKIFVAHSKFVILSAHKLVFIG) is divergent helix-loop-helix motif.

Belongs to the CAS family. In terms of assembly, forms complexes in vivo with PTK2/FAK1, adapter protein CRKL and LYN kinase. Heterodimerizes with NEDD9. Component of a complex comprised of SH2D3C, BCAR1/CAS, and CRK. Within the complex, interacts with SH2D3C (via C-terminus), and CRK. Part of a complex comprised of PTPRA, BCAR1, BCAR3 (via SH2 domain) and SRC; the formation of the complex is dependent on integrin mediated-tyrosine phosphorylation of PTPRA. Interacts with BCAR3 (via Ras-GEF domain); the interaction regulates adhesion-dependent serine phosphorylation. Interacts with SMAD2 and SMAD3. Interacts with NPHP1. Interacts with PTK2B/PYK2. Interacts (via C-terminus) with SH2D3C/CHAT isoform 2 (via C-terminus). Interacts with activated CSPG4. Interacts with BMX, INPPL1/SHIP2 and PEAK1. Part of a collagen-stimulated complex involved in cell migration made of CDC42, CRK, TNK2 and BCAR1/p130cas. Interacts with TNK2 via SH3 domains. Interacts (when tyrosine-phosphorylated) with tensin TNS1; the interaction is increased by phosphorylation of TNS1. In terms of processing, PTK2/FAK1 activation mediates phosphorylation at the YDYVHL motif; phosphorylation is most likely catalyzed by SRC family members. SRC-family kinases are recruited to the phosphorylated sites and can phosphorylate other tyrosine residues. Tyrosine phosphorylation is triggered by integrin-mediated adhesion of cells to the extracellular matrix. Post-translationally, dephosphorylated by PTPN14 at Tyr-128. Phosphorylated by SRC kinase in a EDN1- and PTK2B-mediated manner; phosphorylation strengthens its interaction with BCAR3 as part of the PTK2B/BCAR1/BCAR3/RAP1 signaling pathway. In terms of tissue distribution, expressed in B-cells (at protein level). Widely expressed with an abundant expression in the testis. Low level of expression seen in the liver, thymus, and peripheral blood leukocytes.

It localises to the cell junction. Its subcellular location is the focal adhesion. It is found in the cytoplasm. The protein resides in the cell projection. The protein localises to the axon. Functionally, docking protein which plays a central coordinating role for tyrosine kinase-based signaling related to cell adhesion. Implicated in induction of cell migration and cell branching. Involved in the BCAR3-mediated inhibition of TGFB signaling. This Homo sapiens (Human) protein is Breast cancer anti-estrogen resistance protein 1 (BCAR1).